Reading from the N-terminus, the 207-residue chain is Small ribosomal subunit protein uS2 (207 aa).

Belongs to the universal ribosomal protein uS2 family.

This Nitrosopumilus maritimus (strain SCM1) protein is Small ribosomal subunit protein uS2.